The primary structure comprises 271 residues: Cobalt import ATP-binding protein CbiO (271 aa).

In terms of domain architecture, ABC transporter spans 2 to 236 (LATSDLWFRY…TEAMEHAGLT (235 aa)). 34–41 (GANGCGKS) is an ATP binding site.

This sequence belongs to the ABC transporter superfamily. Cobalt importer (TC 3.A.1.18.1) family. In terms of assembly, forms an energy-coupling factor (ECF) transporter complex composed of an ATP-binding protein (A component, CbiO), a transmembrane protein (T component, CbiQ) and 2 possible substrate-capture proteins (S components, CbiM and CbiN) of unknown stoichimetry.

It is found in the cell inner membrane. It functions in the pathway cofactor biosynthesis; adenosylcobalamin biosynthesis. Its function is as follows. Part of the energy-coupling factor (ECF) transporter complex CbiMNOQ involved in cobalt import. Presumably responsible for energy coupling to the transport system. In Salmonella typhi, this protein is Cobalt import ATP-binding protein CbiO.